Reading from the N-terminus, the 80-residue chain is Exodeoxyribonuclease 7 small subunit (80 aa).

The protein belongs to the XseB family. As to quaternary structure, heterooligomer composed of large and small subunits.

It is found in the cytoplasm. It catalyses the reaction Exonucleolytic cleavage in either 5'- to 3'- or 3'- to 5'-direction to yield nucleoside 5'-phosphates.. Its function is as follows. Bidirectionally degrades single-stranded DNA into large acid-insoluble oligonucleotides, which are then degraded further into small acid-soluble oligonucleotides. The sequence is that of Exodeoxyribonuclease 7 small subunit from Halalkalibacterium halodurans (strain ATCC BAA-125 / DSM 18197 / FERM 7344 / JCM 9153 / C-125) (Bacillus halodurans).